The primary structure comprises 239 residues: tRNA1(Val) (adenine(37)-N6)-methyltransferase (239 aa).

Belongs to the methyltransferase superfamily. tRNA (adenine-N(6)-)-methyltransferase family.

It is found in the cytoplasm. It carries out the reaction adenosine(37) in tRNA1(Val) + S-adenosyl-L-methionine = N(6)-methyladenosine(37) in tRNA1(Val) + S-adenosyl-L-homocysteine + H(+). Specifically methylates the adenine in position 37 of tRNA(1)(Val) (anticodon cmo5UAC). This chain is tRNA1(Val) (adenine(37)-N6)-methyltransferase, found in Vibrio campbellii (strain ATCC BAA-1116).